Reading from the N-terminus, the 359-residue chain is 3-dehydroquinate synthase (359 aa).

NAD(+) is bound by residues Glu-72–Lys-77, Gly-106–Asp-110, Thr-130–Ser-131, Lys-143, Lys-152, and Cys-170–Thr-173. Zn(2+) is bound by residues Glu-185, His-248, and His-264.

It belongs to the sugar phosphate cyclases superfamily. Dehydroquinate synthase family. Co(2+) serves as cofactor. It depends on Zn(2+) as a cofactor. NAD(+) is required as a cofactor.

It is found in the cytoplasm. It catalyses the reaction 7-phospho-2-dehydro-3-deoxy-D-arabino-heptonate = 3-dehydroquinate + phosphate. Its pathway is metabolic intermediate biosynthesis; chorismate biosynthesis; chorismate from D-erythrose 4-phosphate and phosphoenolpyruvate: step 2/7. Functionally, catalyzes the conversion of 3-deoxy-D-arabino-heptulosonate 7-phosphate (DAHP) to dehydroquinate (DHQ). The polypeptide is 3-dehydroquinate synthase (Dehalococcoides mccartyi (strain CBDB1)).